The chain runs to 180 residues: Cytidylate kinase (180 aa).

ATP is bound at residue 7–15 (GLPGSGTST).

This sequence belongs to the cytidylate kinase family. Type 2 subfamily.

Its subcellular location is the cytoplasm. The enzyme catalyses CMP + ATP = CDP + ADP. It catalyses the reaction dCMP + ATP = dCDP + ADP. The polypeptide is Cytidylate kinase (cmk) (Methanosarcina mazei (strain ATCC BAA-159 / DSM 3647 / Goe1 / Go1 / JCM 11833 / OCM 88) (Methanosarcina frisia)).